The sequence spans 296 residues: MAEETPRYAVVTGANRGIGFEICRQLASEGIRVVLTSRDENRGLEAVETLKKELEISDQSLLFHQLDVADPASITSLAEFVKTQFGKLDILVNNAGIGGIITDAEALRAGAGKEGFKWDEIITETYELTEECIKINYYGPKRMCEAFIPLLKLSDSPRIVNVSSSMGQLKNVLNEWAKGILSDAENLTEERIDQVINQLLNDFKEGTVKEKNWAKFMSAYVVSKASLNGYTRVLAKKHPEFRVNAVCPGFVKTDMNFKTGVLSVEEGASSPVRLALLPHQETPSGCFFSRKQVSEF.

An NADP(+)-binding site is contributed by 16–40 (RGIGFEICRQLASEGIRVVLTSRDE). Residue Ser164 participates in substrate binding. Residue Tyr220 is the Proton acceptor of the active site.

The protein belongs to the short-chain dehydrogenases/reductases (SDR) family. As to quaternary structure, monomer.

It localises to the cytoplasm. The catalysed reaction is (+)-neomenthol + NADP(+) = (1R,4S)-menthone + NADPH + H(+). Functionally, aldehyde reductase that catalyzes the reduction of the aldehyde carbonyl groups on saturated and alpha,beta-unsaturated aldehydes with more than 5 carbons. Involved in basal resistance against pathogens. The protein is (+)-neomenthol dehydrogenase (SDR1) of Arabidopsis thaliana (Mouse-ear cress).